The sequence spans 268 residues: Taurine import ATP-binding protein TauB (268 aa).

Positions 4–236 (LSIENISMRF…MGVNADLREV (233 aa)) constitute an ABC transporter domain. Position 41 to 48 (41 to 48 (GPSGCGKT)) interacts with ATP.

It belongs to the ABC transporter superfamily. Taurine importer (TC 3.A.1.17.1) family. As to quaternary structure, the complex is composed of two ATP-binding proteins (TauB), two transmembrane proteins (TauC) and a solute-binding protein (TauA).

Its subcellular location is the cell inner membrane. It carries out the reaction taurine(out) + ATP + H2O = taurine(in) + ADP + phosphate + H(+). In terms of biological role, part of the ABC transporter complex TauABC involved in taurine import. Responsible for energy coupling to the transport system. This Ruegeria pomeroyi (strain ATCC 700808 / DSM 15171 / DSS-3) (Silicibacter pomeroyi) protein is Taurine import ATP-binding protein TauB.